Here is a 315-residue protein sequence, read N- to C-terminus: Ribosomal RNA small subunit methyltransferase H (315 aa).

Residues 35–37 (GGH), aspartate 55, phenylalanine 80, aspartate 102, and glutamine 109 each bind S-adenosyl-L-methionine.

This sequence belongs to the methyltransferase superfamily. RsmH family.

It localises to the cytoplasm. The catalysed reaction is cytidine(1402) in 16S rRNA + S-adenosyl-L-methionine = N(4)-methylcytidine(1402) in 16S rRNA + S-adenosyl-L-homocysteine + H(+). In terms of biological role, specifically methylates the N4 position of cytidine in position 1402 (C1402) of 16S rRNA. In Shewanella pealeana (strain ATCC 700345 / ANG-SQ1), this protein is Ribosomal RNA small subunit methyltransferase H.